A 172-amino-acid polypeptide reads, in one-letter code: Ribosome maturation factor RimM (172 aa).

Positions 96 to 168 constitute a PRC barrel domain; that stretch reads EGEFYYHQII…RVDVELMEGL (73 aa).

This sequence belongs to the RimM family. Binds ribosomal protein uS19.

It localises to the cytoplasm. Functionally, an accessory protein needed during the final step in the assembly of 30S ribosomal subunit, possibly for assembly of the head region. Essential for efficient processing of 16S rRNA. May be needed both before and after RbfA during the maturation of 16S rRNA. It has affinity for free ribosomal 30S subunits but not for 70S ribosomes. This Streptococcus pyogenes serotype M6 (strain ATCC BAA-946 / MGAS10394) protein is Ribosome maturation factor RimM.